Consider the following 186-residue polypeptide: Ribosome-recycling factor (186 aa).

Belongs to the RRF family.

The protein localises to the cytoplasm. In terms of biological role, responsible for the release of ribosomes from messenger RNA at the termination of protein biosynthesis. May increase the efficiency of translation by recycling ribosomes from one round of translation to another. The protein is Ribosome-recycling factor of Rickettsia conorii (strain ATCC VR-613 / Malish 7).